We begin with the raw amino-acid sequence, 247 residues long: Caffeoyl-CoA O-methyltransferase 2 (247 aa).

Substrate is bound at residue K21. S-adenosyl-L-methionine is bound by residues T63, E85, G87–V88, S93, D111, and A140. Residue D163 participates in substrate binding. D163 is a binding site for a divalent metal cation. Residue D165 participates in S-adenosyl-L-methionine binding. The a divalent metal cation site is built by D189 and N190. Position 194 (N194) interacts with substrate.

It belongs to the class I-like SAM-binding methyltransferase superfamily. Cation-dependent O-methyltransferase family. CCoAMT subfamily. It depends on a divalent metal cation as a cofactor.

It catalyses the reaction (E)-caffeoyl-CoA + S-adenosyl-L-methionine = (E)-feruloyl-CoA + S-adenosyl-L-homocysteine + H(+). It participates in aromatic compound metabolism; phenylpropanoid biosynthesis. Methylates caffeoyl-CoA to feruloyl-CoA and 5-hydroxyferuloyl-CoA to sinapoyl-CoA. Plays a role in the synthesis of feruloylated polysaccharides. Involved in the reinforcement of the plant cell wall. Also involved in the responding to wounding or pathogen challenge by the increased formation of cell wall-bound ferulic acid polymers. The protein is Caffeoyl-CoA O-methyltransferase 2 (CCOAOMT2) of Eucalyptus globulus (Tasmanian blue gum).